The sequence spans 431 residues: Putative serine/threonine-protein kinase B (431 aa).

The Protein kinase domain maps to 20 to 279; that stretch reads YLNKGIVGLG…VRENFQIPYI (260 aa). ATP is bound by residues 26–34 and Lys-49; that span reads VGLGSYGEG. The active-site Proton acceptor is the Asp-147. The 99-residue stretch at 331 to 429 folds into the PH domain; it reads DVTHRGHVNK…WVHAIQRGIG (99 aa).

It belongs to the protein kinase superfamily. Ser/Thr protein kinase family.

The catalysed reaction is L-seryl-[protein] + ATP = O-phospho-L-seryl-[protein] + ADP + H(+). The enzyme catalyses L-threonyl-[protein] + ATP = O-phospho-L-threonyl-[protein] + ADP + H(+). This chain is Putative serine/threonine-protein kinase B (NRKB), found in Trypanosoma brucei brucei.